We begin with the raw amino-acid sequence, 240 residues long: Tumor protein p53-inducible nuclear protein 1 (240 aa).

Positions 25–37 (EKEDDEWILVDFI) match the LIR motif.

In terms of assembly, interacts with p53/TP53 and HIPK2. Interacts with PRKCG, GABARAP, GABARAPL1, GABARAPL2, MAP1LC3A, MAP1LC3B and MAP1LC3C. In terms of tissue distribution, ubiquitously expressed.

It is found in the cytoplasm. The protein resides in the cytosol. The protein localises to the nucleus. It localises to the PML body. Its subcellular location is the cytoplasmic vesicle. It is found in the autophagosome. Its function is as follows. Antiproliferative and proapoptotic protein involved in cell stress response which acts as a dual regulator of transcription and autophagy. Acts as a positive regulator of autophagy. In response to cellular stress or activation of autophagy, relocates to autophagosomes where it interacts with autophagosome-associated proteins GABARAP, GABARAPL1/L2, MAP1LC3A/B/C and regulates autophagy. Acts as an antioxidant and plays a major role in p53/TP53-driven oxidative stress response. Possesses both a p53/TP53-independent intracellular reactive oxygen species (ROS) regulatory function and a p53/TP53-dependent transcription regulatory function. Positively regulates p53/TP53 and p73/TP73 and stimulates their capacity to induce apoptosis and regulate cell cycle. In response to double-strand DNA breaks, promotes p53/TP53 phosphorylation on 'Ser-46' and subsequent apoptosis. Acts as a tumor suppressor by inducing cell death by an autophagy and caspase-dependent mechanism. Can reduce cell migration by regulating the expression of SPARC. The sequence is that of Tumor protein p53-inducible nuclear protein 1 (TP53INP1) from Homo sapiens (Human).